An 81-amino-acid polypeptide reads, in one-letter code: Costars family protein ABRACL (81 aa).

Residue methionine 1 is modified to N-acetylmethionine.

The protein belongs to the costars family.

The sequence is that of Costars family protein ABRACL (ABRACL) from Homo sapiens (Human).